The following is a 334-amino-acid chain: MTENSDKVPITMVGPEDVEFCSPPAYATVTVKPSGSPTRLLKVGAVVLISGAVLLLFGAIGAFYFWKGNDNHIYNVHYTMSINGRLQDASMEIDAANNLETFKMGSGAEEAIEVNDFQNGITGIRFAGGEKCYIKAQVKARIPEVSTGTKQSISELEGKIMPVKYEENSLIWVAVDQPVKDNSFLSSKILEFCGDLPIFWLKPMYPKEIPRERREVVRSSAPSTTRRPHSEPRGNAGPGRLSNRTRPSVQDDEEPFNPDNPYHQQEGESMTFDPRLDHEGICCIECRRSYTHCQKICEPLGGYYPWPYNYQGCRSACRVVMPCSWWVARILGMV.

The chain crosses the membrane as a helical span at residues Val-46–Trp-66. Positions Gly-105–Leu-201 constitute a BRICHOS domain. A disulfide bond links Cys-132 and Cys-193. A propeptide spanning residues Arg-211 to Arg-214 is cleaved from the precursor. Positions Glu-212–Glu-268 are disordered. Asn-243 carries an N-linked (GlcNAc...) asparagine glycan. 4 cysteine pairs are disulfide-bonded: Cys-282-Cys-286, Cys-283-Cys-323, Cys-293-Cys-317, and Cys-297-Cys-313.

This sequence belongs to the chondromodulin-1 family. In terms of processing, after cleavage, the post-translationally modified ChM-I is secreted as a glycoprotein. Detected in cartilage, cardiac valves and valvular interstitial cells (at protein level). Expressed in eye.

Its subcellular location is the secreted. It localises to the extracellular space. The protein resides in the extracellular matrix. It is found in the endomembrane system. Its function is as follows. Bifunctional growth regulator that stimulates the growth of cultured chondrocytes in the presence of basic fibroblast growth factor (FGF) but inhibits the growth of cultured vascular endothelial cells. May contribute to the rapid growth of cartilage and vascular invasion prior to the replacement of cartilage by bone during endochondral bone development. Inhibits in vitro tube formation and mobilization of endothelial cells. Plays a role as antiangiogenic factor in cardiac valves to suppress neovascularization. The chain is Leukocyte cell-derived chemotaxin 1 from Rattus norvegicus (Rat).